A 397-amino-acid polypeptide reads, in one-letter code: Acetate kinase 2 (397 aa).

Asparagine 10 is a Mg(2+) binding site. Lysine 17 provides a ligand contact to ATP. Residue arginine 90 participates in substrate binding. Aspartate 147 (proton donor/acceptor) is an active-site residue. ATP-binding positions include 207 to 211 (HLGNG), 281 to 283 (DAR), and 329 to 333 (GIGEN). Glutamate 385 contacts Mg(2+).

This sequence belongs to the acetokinase family. As to quaternary structure, homodimer. Requires Mg(2+) as cofactor. It depends on Mn(2+) as a cofactor.

The protein resides in the cytoplasm. The enzyme catalyses acetate + ATP = acetyl phosphate + ADP. The protein operates within metabolic intermediate biosynthesis; acetyl-CoA biosynthesis; acetyl-CoA from acetate: step 1/2. In terms of biological role, catalyzes the formation of acetyl phosphate from acetate and ATP. Can also catalyze the reverse reaction. This Vibrio parahaemolyticus serotype O3:K6 (strain RIMD 2210633) protein is Acetate kinase 2.